The following is a 265-amino-acid chain: Mlc titration factor A (265 aa).

The Zn(2+) site is built by H111, H148, H152, and E211.

The protein belongs to the MtfA family. Interacts with Mlc. The cofactor is Zn(2+).

The protein resides in the cytoplasm. Its function is as follows. Involved in the modulation of the activity of the glucose-phosphotransferase system (glucose-PTS). Interacts with the transcriptional repressor Mlc, preventing its interaction with DNA and leading to the modulation of expression of genes regulated by Mlc, including ptsG, which encodes the PTS system glucose-specific EIICB component. In terms of biological role, shows zinc-dependent metallopeptidase activity. In Escherichia fergusonii, this protein is Mlc titration factor A.